The chain runs to 359 residues: Phosphoribosylformylglycinamidine cyclo-ligase (359 aa).

This sequence belongs to the AIR synthase family.

The protein resides in the cytoplasm. It carries out the reaction 2-formamido-N(1)-(5-O-phospho-beta-D-ribosyl)acetamidine + ATP = 5-amino-1-(5-phospho-beta-D-ribosyl)imidazole + ADP + phosphate + H(+). It functions in the pathway purine metabolism; IMP biosynthesis via de novo pathway; 5-amino-1-(5-phospho-D-ribosyl)imidazole from N(2)-formyl-N(1)-(5-phospho-D-ribosyl)glycinamide: step 2/2. In Brucella melitensis biotype 2 (strain ATCC 23457), this protein is Phosphoribosylformylglycinamidine cyclo-ligase.